The following is a 168-amino-acid chain: Probable acetolactate synthase small subunit (168 aa).

In terms of domain architecture, ACT spans isoleucine 10 to proline 84.

This sequence belongs to the acetolactate synthase small subunit family. In terms of assembly, dimer of large and small chains.

It catalyses the reaction 2 pyruvate + H(+) = (2S)-2-acetolactate + CO2. It functions in the pathway amino-acid biosynthesis; L-isoleucine biosynthesis; L-isoleucine from 2-oxobutanoate: step 1/4. It participates in amino-acid biosynthesis; L-valine biosynthesis; L-valine from pyruvate: step 1/4. This chain is Probable acetolactate synthase small subunit (ilvH), found in Methanothermobacter thermautotrophicus (strain ATCC 29096 / DSM 1053 / JCM 10044 / NBRC 100330 / Delta H) (Methanobacterium thermoautotrophicum).